The primary structure comprises 1061 residues: NACHT, LRR and PYD domains-containing protein 12 (1061 aa).

Positions 1 to 95 (MLRTAGRDGL…WERGQREDLV (95 aa)) constitute a Pyrin domain. Residues 129–201 (YRDYVRRKFR…SPIKIETLFE (73 aa)) form the FISNA domain. The NACHT domain occupies 211–528 (RTVVMQGAAG…EFFAAMYYIL (318 aa)). 217–224 (GAAGIGKS) is an ATP binding site. LRR repeat units follow at residues 828–848 (HLVE…RLLC), 857–878 (RLRT…ELAS), 885–906 (SLRE…LLCE), 914–935 (KLQT…GLSV), 942–962 (NLRE…WLLA), 971–992 (RLQK…NLYF), 999–1020 (TLTD…LLCK), and 1028–1049 (KLRV…RLAA).

Belongs to the NLRP family. As to quaternary structure, interacts (via pyrin domain) with ASC. Interacts (via pyrin domain) with FAF1 (via UBA domain). Interacts with MAP3K14; this interaction promotes proteasomal degradation of MAP3K14. Interacts with NOD2; this interaction promotes degradation of NOD2 through the ubiquitin-proteasome pathway. Interacts with HSPA1A and HSPA8. Interacts with HSP90AA1. Interacts with TRIM25; this interaction inhibits RIGI-mediated signaling pathway. Detected only in peripheral blood leukocytes, predominantly in eosinophils and granulocytes, and at lower levels in monocytes.

It is found in the cytoplasm. Functionally, plays an essential role as an potent mitigator of inflammation. Primarily expressed in dendritic cells and macrophages, inhibits both canonical and non-canonical NF-kappa-B and ERK activation pathways. Functions as a negative regulator of NOD2 by targeting it to degradation via the proteasome pathway. In turn, promotes bacterial tolerance. Also inhibits the RIGI-mediated immune signaling against RNA viruses by reducing the E3 ubiquitin ligase TRIM25-mediated 'Lys-63'-linked RIGI activation but enhancing the E3 ubiquitin ligase RNF125-mediated 'Lys-48'-linked RIGI degradation. Also acts as a negative regulator of inflammatory response to mitigate obesity and obesity-associated diseases in adipose tissue. This is NACHT, LRR and PYD domains-containing protein 12 (NLRP12) from Homo sapiens (Human).